A 119-amino-acid polypeptide reads, in one-letter code: Large ribosomal subunit protein bL20 (119 aa).

Belongs to the bacterial ribosomal protein bL20 family.

In terms of biological role, binds directly to 23S ribosomal RNA and is necessary for the in vitro assembly process of the 50S ribosomal subunit. It is not involved in the protein synthesizing functions of that subunit. The sequence is that of Large ribosomal subunit protein bL20 from Paracoccus denitrificans (strain Pd 1222).